An 824-amino-acid chain; its full sequence is Intraflagellar transport protein 88 homolog (824 aa).

2 disordered regions span residues 1-27 (MENV…PAYD) and 111-134 (AFDP…DSPE). TPR repeat units lie at residues 196–229 (YSVL…KMFS), 232–265 (GRLK…IPSV), 271–304 (IKIM…APSL), 415–448 (NDLE…DSRV), 450–483 (SAAA…DRYN), 484–517 (PSAL…DSSC), 518–551 (TEAL…LRNS), 552–585 (AQVL…VPTD), 586–619 (SQAL…FPSN), 620–653 (IEVI…QPTQ), and 654–687 (VKWQ…FPEN). Over residues 721–731 (EMREQRIKSGR) the composition is skewed to basic and acidic residues. A disordered region spans residues 721–824 (EMREQRIKSG…EELGDDLLPE (104 aa)). The span at 748–757 (DSGQNNSASS) shows a compositional bias: polar residues. Positions 797 to 808 (ERPKTAAKKRID) are enriched in basic and acidic residues. Residues 809–824 (EDDFADEELGDDLLPE) show a composition bias toward acidic residues.

As to quaternary structure, component of the IFT complex B, at least composed of IFT20, IFT22, IFT25, IFT27, IFT46, IFT52, TRAF3IP1/IFT54, IFT57, IFT74, IFT80, IFT81, and IFT88. Interacts with IFT20, IFT22, IFT25, IFT27, IFT52, TRAF3IP1, IFT74, IFT80 and IFT81. Interacts with IFT172. Interacts with IFT57. Interacts with IFT46. Interacts with IFT70B. Interacts with C2CD3. Interacts with ENTR1 (via N-terminus). Interacts with LRRC56. Interacts with DZIP1. Interacts with CCDC38. Interacts with CCDC146. Interacts with CFAP53. Testis.

Its subcellular location is the cytoplasm. It localises to the cytoskeleton. The protein resides in the microtubule organizing center. The protein localises to the centrosome. It is found in the centriole. Its subcellular location is the cilium basal body. It localises to the cell projection. The protein resides in the cilium. The protein localises to the flagellum. Positively regulates primary cilium biogenesis. Also involved in autophagy since it is required for trafficking of ATG16L and the expansion of the autophagic compartment. In Mus musculus (Mouse), this protein is Intraflagellar transport protein 88 homolog (Ift88).